Reading from the N-terminus, the 373-residue chain is Transcription factor SPATULA (373 aa).

Residues 1–21 are compositionally biased toward basic and acidic residues; that stretch reads MISQREEREEKKQRVMGDKKL. Disordered stretches follow at residues 1–46 and 141–210; these read MISQ…PSSS and VQGN…KRRR. Positions 141–160 are enriched in low complexity; sequence VQGNSSGTRVSSSSVGASGN. Over residues 161-177 the composition is skewed to acidic residues; it reads ETDEYDCESEEGGEAVV. Over residues 182 to 191 the composition is skewed to low complexity; sequence SSKSGPSSRS. Over residues 197 to 210 the composition is skewed to basic and acidic residues; the sequence is RAAEVHNLSEKRRR. One can recognise a bHLH domain in the interval 197–246; sequence RAAEVHNLSEKRRRSRINEKMKALQSLIPNSNKTDKASMLDEAIEYLKQL.

Homodimer. Interacts with HEC1, HEC2 and HEC3. Binds to RGL2 and RGA. Expressed in lateral root caps, young leaves, stipules, maturing pith cells of the stem, differentiating vascular cells, shoot apical meristems and flowers.

Its subcellular location is the nucleus. Its function is as follows. Transcription factor that plays a role in floral organogenesis. Promotes the growth of carpel margins and of pollen tract tissues derived from them. This chain is Transcription factor SPATULA (SPT), found in Arabidopsis thaliana (Mouse-ear cress).